Here is a 313-residue protein sequence, read N- to C-terminus: Beta-lactamase (313 aa).

The N-terminal stretch at 1–15 (MQRIGVTDYTILGTV) is a signal peptide. The active-site Acyl-ester intermediate is the serine 190.

The protein belongs to the class-C beta-lactamase family.

The catalysed reaction is a beta-lactam + H2O = a substituted beta-amino acid. Functionally, upon expression in E.coli enables the latter to utilize penicillin as a carbon source. In Burkholderia multivorans (strain ATCC 17616 / 249), this protein is Beta-lactamase (penA).